A 404-amino-acid polypeptide reads, in one-letter code: POU domain, class 2, transcription factor 3L (404 aa).

2 disordered regions span residues Met-1–Phe-29 and Thr-44–Glu-67. Residues Gly-16–Phe-29 show a composition bias toward basic and acidic residues. The POU-specific domain occupies Gln-187–Glu-235. The homeobox DNA-binding region spans Lys-259–Val-297. A disordered region spans residues Met-346 to Leu-367. Low complexity predominate over residues Ser-350–Pro-363.

This sequence belongs to the POU transcription factor family. Class-2 subfamily.

It localises to the nucleus. In terms of biological role, transcription factor that binds to the octamer motif (5'-ATTTGCAT-3') and regulates cell type-specific differentiation pathways. This chain is POU domain, class 2, transcription factor 3L (pou2f3.L), found in Xenopus laevis (African clawed frog).